The chain runs to 352 residues: RNA-binding protein lark (352 aa).

2 consecutive RRM domains span residues 7–77 and 86–156; these read FKLF…AAKS and TKIF…VSTS. The CCHC-type zinc-finger motif lies at 168 to 185; it reads EQCYRCGRSGHWSKECPR. Disordered regions lie at residues 187–228 and 254–352; these read YGSA…LRDR and YQTS…YAPY. S198 and S201 each carry phosphoserine. Pro residues-rich tracts occupy residues 214–224 and 262–277; these read PYPPPPPPPPF and FPPPPISRREPMPLPP. Residues 279–288 are compositionally biased toward polar residues; the sequence is LSGSLRSCSV. S315 and S325 each carry phosphoserine. Residues 320–334 show a composition bias toward basic and acidic residues; sequence GYEDFSRDAFDERMI.

As to expression, expressed in the CNS and in CCAP neurons of the ventral nervous system (VNS), which control insect ecdysis.

The protein localises to the cytoplasm. The protein resides in the nucleus. In terms of biological role, essential RNA-binding protein. May be required for circadian repression of eclosion. Also essential for nurse cell dumping during oogenesis, the process whereby the cytoplasmic contents of nurse cells are transferred to the oocyte late in it's development. The protein is RNA-binding protein lark (lark) of Drosophila melanogaster (Fruit fly).